Consider the following 160-residue polypeptide: Transmembrane protein 191A (160 aa).

The chain crosses the membrane as a helical span at residues 24-44 (FCFPLDFVSNLFWIFASKFII).

The protein belongs to the TMEM191 family.

The protein resides in the membrane. This chain is Transmembrane protein 191A (TMEM191A), found in Homo sapiens (Human).